The following is a 92-amino-acid chain: Elongation factor 1-beta (92 aa).

This sequence belongs to the EF-1-beta/EF-1-delta family.

Promotes the exchange of GDP for GTP in EF-1-alpha/GDP, thus allowing the regeneration of EF-1-alpha/GTP that could then be used to form the ternary complex EF-1-alpha/GTP/AAtRNA. This is Elongation factor 1-beta from Korarchaeum cryptofilum (strain OPF8).